Here is a 227-residue protein sequence, read N- to C-terminus: Phosphoribosylformylglycinamidine synthase subunit PurQ (227 aa).

The Glutamine amidotransferase type-1 domain maps to 3–225; sequence FAVIVFPGSN…LKQWRETYVV (223 aa). Residue Cys-86 is the Nucleophile of the active site. Residues His-194 and Glu-196 contribute to the active site.

As to quaternary structure, part of the FGAM synthase complex composed of 1 PurL, 1 PurQ and 2 PurS subunits.

The protein localises to the cytoplasm. It catalyses the reaction N(2)-formyl-N(1)-(5-phospho-beta-D-ribosyl)glycinamide + L-glutamine + ATP + H2O = 2-formamido-N(1)-(5-O-phospho-beta-D-ribosyl)acetamidine + L-glutamate + ADP + phosphate + H(+). It carries out the reaction L-glutamine + H2O = L-glutamate + NH4(+). It functions in the pathway purine metabolism; IMP biosynthesis via de novo pathway; 5-amino-1-(5-phospho-D-ribosyl)imidazole from N(2)-formyl-N(1)-(5-phospho-D-ribosyl)glycinamide: step 1/2. Functionally, part of the phosphoribosylformylglycinamidine synthase complex involved in the purines biosynthetic pathway. Catalyzes the ATP-dependent conversion of formylglycinamide ribonucleotide (FGAR) and glutamine to yield formylglycinamidine ribonucleotide (FGAM) and glutamate. The FGAM synthase complex is composed of three subunits. PurQ produces an ammonia molecule by converting glutamine to glutamate. PurL transfers the ammonia molecule to FGAR to form FGAM in an ATP-dependent manner. PurS interacts with PurQ and PurL and is thought to assist in the transfer of the ammonia molecule from PurQ to PurL. The chain is Phosphoribosylformylglycinamidine synthase subunit PurQ from Bacillus cereus (strain Q1).